The chain runs to 166 residues: Probable RNA-binding protein EIF1AD (166 aa).

In terms of domain architecture, S1-like spans 5 to 89 (TKRKHVVKEV…VKAEISFVLC (85 aa)). The short motif at 6 to 12 (KRKHVVK) is the Nuclear localization signal element. A Phosphothreonine modification is found at Thr-33. Positions 56-65 (KYRKNIWIKR) match the Nuclear localization signal motif. Residues 114–166 (NNNRNRQTQPELPAEPQLSGEESSSEDDSDLFVNTNRRQYRESEEESEEEEAA) form a disordered region. A phosphoserine mark is found at Ser-132, Ser-136, Ser-137, Ser-138, Ser-156, and Ser-160. The segment covering 156–166 (SEEESEEEEAA) has biased composition (acidic residues).

The protein belongs to the EIF1AD family. As to quaternary structure, interacts with GAPDH and STAT1.

The protein localises to the nucleus. Its function is as follows. Plays a role into cellular response to oxidative stress. Decreases cell proliferation. The polypeptide is Probable RNA-binding protein EIF1AD (EIF1AD) (Pongo abelii (Sumatran orangutan)).